Reading from the N-terminus, the 245-residue chain is Alpha carbonic anhydrase 2 (245 aa).

A signal peptide spans 1 to 23 (MDKISIRCFIFLVLTSFVTTVSC). One can recognise an Alpha-carbonic anhydrase domain in the interval 37 to 245 (HEFSYEWNQE…THRYFLLFFT (209 aa)). A disulfide bond links Cys-62 and Cys-222. Asn-95 carries an N-linked (GlcNAc...) asparagine glycan. The active-site Proton acceptor is the His-103. Asn-120 is a glycosylation site (N-linked (GlcNAc...) asparagine). Zn(2+)-binding residues include His-130, His-132, and His-149. N-linked (GlcNAc...) asparagine glycosylation occurs at Asn-156. Residue 218–219 (TT) participates in substrate binding.

The protein belongs to the alpha-class carbonic anhydrase family. The cofactor is Zn(2+). In terms of processing, N-glycosylated. Expressed in stems and roots.

It localises to the plastid. Its subcellular location is the chloroplast stroma. It carries out the reaction hydrogencarbonate + H(+) = CO2 + H2O. Reversible hydration of carbon dioxide. The sequence is that of Alpha carbonic anhydrase 2 (ACA2) from Arabidopsis thaliana (Mouse-ear cress).